The following is a 266-amino-acid chain: UPF0354 protein LMHCC_0955 (266 aa).

This sequence belongs to the UPF0354 family.

The polypeptide is UPF0354 protein LMHCC_0955 (Listeria monocytogenes serotype 4a (strain HCC23)).